The chain runs to 618 residues: MSLPIPPKFLPPLKSPPIHHHQTPPPLAPPRAAISISIPDTGLGRTGTILDESTSSAFRDYQSLFVSQRSETIEPVVIKPIEGSIPVNFPSGTYYLAGPGLFTDDHGSTVHPLDGHGYLRAFHIDGNKRKATFTAKYVKTEAKKEEHDPVTDTWRFTHRGPFSVLKGGKRFGNTKVMKNVANTSVLKWAGRLLCLWEGGEPYEIESGSLDTVGRFNVENNGCESCDDDDSSDRDLSGHDIWDTAADLLKPILQGVFKMPPKRFLSHYKVDGRRKRLLTVTCNAEDMLLPRSNFTFCEYDSEFKLIQTKEFKIDDHMMIHDWAFTDTHYILFANRVKLNPIGSIAAMCGMSPMVSALSLNPSNESSPIYILPRFSDKYSRGGRDWRVPVEVSSQLWLIHSGNAYETREDNGDLKIQIQASACSYRWFDFQKMFGYDWQSNKLDPSVMNLNRGDDKLLPHLVKVSMTLDSTGNCNSCDVEPLNGWNKPSDFPVINSSWSGKKNKYMYSAASSGTRSELPHFPFDMVVKFDLDSNLVRTWSTGARRFVGEPMFVPKNSVEEGEEEDDGYIVVVEYAVSVERCYLVILDAKKIGESDAVVSRLEVPRNLTFPMGFHGLWASD.

The transit peptide at 1-31 (MSLPIPPKFLPPLKSPPIHHHQTPPPLAPPR) directs the protein to the chloroplast. A disordered region spans residues 11–34 (PPLKSPPIHHHQTPPPLAPPRAAI). 4 residues coordinate Fe cation: H266, H319, H398, and H612.

This sequence belongs to the carotenoid oxygenase family. The cofactor is Fe(2+). As to expression, expressed in flowers, siliques, inflorescence stems, petiole, leaves and roots.

The protein resides in the plastid. It is found in the chloroplast. The catalysed reaction is 9-cis-beta-carotene + O2 = 9-cis-10'-apo-beta-carotenal + beta-ionone. Involved in strigolactones biosynthesis by cleaving asymmetrically a variety of linear and cyclic carotenoids at the 9-10 double bond. Produces one C(13) beta-ionone and the C(27) 10'-apo-beta-carotenal. Strigolactones are hormones that inhibit tillering and shoot branching through the MAX-dependent pathway, contribute to the regulation of shoot architectural response to phosphate-limiting conditions and function as rhizosphere signal that stimulates hyphal branching of arbuscular mycorrhizal fungi and trigger seed germination of root parasitic weeds. No activity on lycopene, lutein, zeaxanthin, violaxanthin or neoxanthin. Probably not involved in abscisic acid biosynthesis. This chain is Carotenoid cleavage dioxygenase 7, chloroplastic (CCD7), found in Arabidopsis thaliana (Mouse-ear cress).